The following is a 296-amino-acid chain: Heme oxygenase 1 (296 aa).

The Cytoplasmic segment spans residues 1–273 (METSQPHNAE…RMQADMLTTS (273 aa)). Heme b is bound by residues Lys21, His28, Tyr137, and Arg186. The disordered stretch occupies residues 231–264 (GHAVQPKAELRTRSVNKSHENSPAAGKESERTSR). Residues 238–250 (AELRTRSVNKSHE) show a composition bias toward basic and acidic residues. Residues 274–296 (PLVRWLLALGFIATTVAVGLFAM) traverse the membrane as a helical; Anchor for type IV membrane protein segment.

Belongs to the heme oxygenase family. In terms of assembly, homodimer and higher order homooligomer. Oligomerization is crucial for its stability and function in the endoplasmic reticulum. Post-translationally, a soluble form arises by proteolytic removal of the membrane anchor.

It is found in the endoplasmic reticulum membrane. It catalyses the reaction heme b + 3 reduced [NADPH--hemoprotein reductase] + 3 O2 = biliverdin IXalpha + CO + Fe(2+) + 3 oxidized [NADPH--hemoprotein reductase] + 3 H2O + H(+). Inhibited by metalloporphyrins in the following order of decreasing potency: tin mesoporphyrin &gt; tin protoporphyrin &gt; zinc protoporphyrin &gt; manganese protoporphyrin &gt; cobalt protoporphyrin. Functionally, catalyzes the oxidative cleavage of heme at the alpha-methene bridge carbon, released as carbon monoxide (CO), to generate biliverdin IXalpha, while releasing the central heme iron chelate as ferrous iron. Affords protection against programmed cell death and this cytoprotective effect relies on its ability to catabolize free heme and prevent it from sensitizing cells to undergo apoptosis. Its function is as follows. Catalyzes the oxidative cleavage of heme at the alpha-methene bridge carbon, released as carbon monoxide (CO), to generate biliverdin IXalpha, while releasing the central heme iron chelate as ferrous iron. This is Heme oxygenase 1 (HMOX1) from Gallus gallus (Chicken).